The chain runs to 195 residues: MEYTFNKLTKKDVKKLKVGDIVYLNGKIYTARDEAHLKIIEMLKSNEKLPFDLNESIIYHAGPIMKKVNDSWVCVSIGPTTSARMNDVEEEFIKLTNISAIVGKGGMKKELLKTFEDYGVVYLAAPGGCAALLANSVKRVDNVYFLDELGMPEAVWELEVNNFGPLIVAMDSHGNSIYEEVNKKVYEKLNELIGL.

His-36 is a catalytic residue. Position 104 (Lys-104) interacts with substrate.

The protein belongs to the class-I fumarase family. As to quaternary structure, heterotetramer of two alpha and two beta subunits.

It carries out the reaction (2R,3R)-tartrate = oxaloacetate + H2O. This Methanocaldococcus jannaschii (strain ATCC 43067 / DSM 2661 / JAL-1 / JCM 10045 / NBRC 100440) (Methanococcus jannaschii) protein is Putative L(+)-tartrate dehydratase subunit beta.